A 409-amino-acid chain; its full sequence is MAREKFERTKPHVNIGTIGHVDHGKTTLTAAITMAMAARGGSAGKKYDEIDSSPEEKARGITINTAHVEYETATRHYAHVDCPGHADYVKNMITGAAQMDGAILVVSGADGPMPQTKEHILLAKQVGVPNIVVFLNKEDQVDDEELLELVDMEIRETLSSYDFPGDEIPVIAGSALLALEALSSNPKIGDGEDKWVDKIFSLMDNVDSYIPTPARETDKTFLMAVEDVFSITGRGTVATGRVERGTVKVGASIEIIGYVDTRVATVTGLEMFQKTLEESVAGDNVGVLLRGIQKEDIERGMVLAQPGTITPHTKFEAQVYVLKKEEGGRHTPFFPGYRPQFYVRTTDVTGKIESFISDEGDEATMVMPGDRVKMVVELIQPIAIENGMRFAIREGGRTVGAGVVSSILK.

The region spanning 10-214 is the tr-type G domain; it reads KPHVNIGTIG…NVDSYIPTPA (205 aa). The interval 19–26 is G1; the sequence is GHVDHGKT. Residue 19–26 participates in GTP binding; sequence GHVDHGKT. Thr26 lines the Mg(2+) pocket. The tract at residues 60–64 is G2; sequence GITIN. A G3 region spans residues 81-84; the sequence is DCPG. GTP contacts are provided by residues 81-85 and 136-139; these read DCPGH and NKED. A G4 region spans residues 136–139; the sequence is NKED. Positions 174–176 are G5; it reads SAL.

It belongs to the TRAFAC class translation factor GTPase superfamily. Classic translation factor GTPase family. EF-Tu/EF-1A subfamily.

Its subcellular location is the plastid. It localises to the chloroplast. It carries out the reaction GTP + H2O = GDP + phosphate + H(+). In terms of biological role, GTP hydrolase that promotes the GTP-dependent binding of aminoacyl-tRNA to the A-site of ribosomes during protein biosynthesis. The chain is Elongation factor Tu, chloroplastic (tufA) from Ostreococcus tauri.